The following is a 324-amino-acid chain: Interleukin-12 subunit beta (324 aa).

The N-terminal stretch at 1–22 is a signal peptide; sequence MHLQQLVVSWFSLVWLASPIVA. Residues 23-106 enclose the Ig-like C2-type domain; that stretch reads IWELEKNVYV…LSQSLLLLHK (84 aa). Cysteines 50 and 90 form a disulfide. N-linked (GlcNAc...) asparagine glycosylation is found at Asn-125, Asn-135, and Asn-218. The 92-residue stretch at 233-324 folds into the Fibronectin type-III domain; that stretch reads PPKNLQLNPL…WSEWASVSCN (92 aa).

This sequence belongs to the IL-12B family. As to quaternary structure, heterodimer with IL12A; disulfide-linked. The heterodimer is known as interleukin IL-12. Heterodimer with IL23A; disulfide-linked. The heterodimer is known as interleukin IL-23. Also secreted as a monomer. Interacts with NBR1; this interaction promotes IL-12 secretion.

The protein resides in the secreted. In terms of biological role, cytokine that can act as a growth factor for activated T and NK cells, enhance the lytic activity of NK/lymphokine-activated killer cells, and stimulate the production of IFN-gamma by resting PBMC. Associates with IL23A to form the IL-23 interleukin, a heterodimeric cytokine which functions in innate and adaptive immunity. IL-23 may constitute with IL-17 an acute response to infection in peripheral tissues. IL-23 binds to a heterodimeric receptor complex composed of IL12RB1 and IL23R, activates the Jak-Stat signaling cascade, stimulates memory rather than naive T-cells and promotes production of pro-inflammatory cytokines. IL-23 induces autoimmune inflammation and thus may be responsible for autoimmune inflammatory diseases and may be important for tumorigenesis. In Sus scrofa (Pig), this protein is Interleukin-12 subunit beta (IL12B).